Consider the following 296-residue polypeptide: Chronophin (296 aa).

The active-site Nucleophile is the D25. Mg(2+) is bound by residues D25 and D27. The Proton donor role is filled by D27. Substrate contacts are provided by residues 58–60 (SNN), H182, and K213. D238 serves as a coordination point for Mg(2+).

Belongs to the HAD-like hydrolase superfamily. Homodimer. It depends on Mg(2+) as a cofactor. As to expression, ubiquitously expressed (at protein level). Highly expressed in all the regions of central nerve system except the spinal cord. Also expressed at high level in liver and testis. In fetus, it is weakly expressed in all organs except brain.

It is found in the cytoplasm. It localises to the cytosol. The protein localises to the cytoskeleton. The protein resides in the cell projection. Its subcellular location is the ruffle membrane. It is found in the lamellipodium membrane. It localises to the cell membrane. It carries out the reaction pyridoxal 5'-phosphate + H2O = pyridoxal + phosphate. The enzyme catalyses pyridoxine 5'-phosphate + H2O = pyridoxine + phosphate. It catalyses the reaction pyridoxamine + phosphate = pyridoxamine 5'-phosphate + H2O. The catalysed reaction is O-phospho-L-seryl-[protein] + H2O = L-seryl-[protein] + phosphate. With respect to regulation, inhibited by NaF, Zn(2+), Ca(2+), Mn(2+) and EDTA. Its function is as follows. Functions as a pyridoxal phosphate (PLP) phosphatase, which also catalyzes the dephosphorylation of pyridoxine 5'-phosphate (PNP) and pyridoxamine 5'-phosphate (PMP), with order of substrate preference PLP &gt; PNP &gt; PMP and therefore plays a role in vitamin B6 metabolism. Also functions as a protein serine phosphatase that specifically dephosphorylates 'Ser-3' in proteins of the actin-depolymerizing factor (ADF)/cofilin family like CFL1 and DSTN. Thereby, regulates cofilin-dependent actin cytoskeleton reorganization, being required for normal progress through mitosis and normal cytokinesis. Does not dephosphorylate phosphothreonines in LIMK1. Does not dephosphorylate peptides containing phosphotyrosine. The sequence is that of Chronophin from Homo sapiens (Human).